The primary structure comprises 130 residues: Small ribosomal subunit protein uS9 (130 aa).

This sequence belongs to the universal ribosomal protein uS9 family.

This chain is Small ribosomal subunit protein uS9, found in Geobacillus sp. (strain WCH70).